We begin with the raw amino-acid sequence, 76 residues long: Beta-defensin 121 (76 aa).

Positions 1-15 are cleaved as a signal peptide; it reads MKLLLLLLTVTLLLA. Cystine bridges form between Cys-23–Cys-50, Cys-30–Cys-44, and Cys-34–Cys-51.

It belongs to the beta-defensin family. In terms of tissue distribution, abundant expression in the male reproductive tract only.

It localises to the secreted. Functionally, has antibacterial activity. In Homo sapiens (Human), this protein is Beta-defensin 121 (DEFB121).